Reading from the N-terminus, the 99-residue chain is Large ribosomal subunit protein uL23 (99 aa).

It belongs to the universal ribosomal protein uL23 family. As to quaternary structure, part of the 50S ribosomal subunit. Contacts protein L29, and trigger factor when it is bound to the ribosome.

In terms of biological role, one of the early assembly proteins it binds 23S rRNA. One of the proteins that surrounds the polypeptide exit tunnel on the outside of the ribosome. Forms the main docking site for trigger factor binding to the ribosome. The protein is Large ribosomal subunit protein uL23 of Agathobacter rectalis (strain ATCC 33656 / DSM 3377 / JCM 17463 / KCTC 5835 / VPI 0990) (Eubacterium rectale).